The following is a 245-amino-acid chain: Dehydrogenase/reductase SDR family member 6 (245 aa).

NAD(+) is bound by residues 16-18, Asp-37, and Asp-58; that span reads QGI. A substrate-binding site is contributed by Arg-144. Tyr-147 functions as the Proton acceptor in the catalytic mechanism. Residues Lys-151 and 180–184 contribute to the NAD(+) site; that span reads VDTPS. Substrate-binding residues include Arg-188 and Arg-205.

The protein belongs to the short-chain dehydrogenases/reductases (SDR) family. In terms of assembly, homotetramer.

The protein resides in the cytoplasm. It catalyses the reaction cis-4-hydroxy-L-proline + NAD(+) = 4-oxo-L-proline + NADH + H(+). The catalysed reaction is (R)-3-hydroxybutanoate + NAD(+) = acetoacetate + NADH + H(+). Its pathway is amino-acid metabolism. It participates in siderophore biosynthesis. Its function is as follows. NAD(H)-dependent dehydrogenase/reductase with a preference for cyclic substrates. Catalyzes stereoselective conversion of 4-oxo-L-proline to cis-4-hydroxy-L-proline, likely a detoxification mechanism for ketoprolines. Mediates the formation of 2,5-dihydroxybenzoate (2,5-DHBA), a siderophore that chelates free cytoplasmic iron and associates with LCN2, thereby regulating iron transport and homeostasis while protecting cells against free radical-induced oxidative stress. The iron-siderophore complex is imported into mitochondria, providing an iron source for mitochondrial metabolic processes in particular heme synthesis. May act as a 3-hydroxybutyrate dehydrogenase. The chain is Dehydrogenase/reductase SDR family member 6 from Rattus norvegicus (Rat).